Here is a 279-residue protein sequence, read N- to C-terminus: Pantothenate synthetase (279 aa).

Residue 27–34 (MGYLHEGH) coordinates ATP. His34 serves as the catalytic Proton donor. Gln58 contacts (R)-pantoate. Gln58 is a beta-alanine binding site. 144-147 (GKKD) provides a ligand contact to ATP. Gln150 contributes to the (R)-pantoate binding site. Residues Val173 and 181–184 (MSSR) each bind ATP.

It belongs to the pantothenate synthetase family. Homodimer.

It is found in the cytoplasm. The enzyme catalyses (R)-pantoate + beta-alanine + ATP = (R)-pantothenate + AMP + diphosphate + H(+). It functions in the pathway cofactor biosynthesis; (R)-pantothenate biosynthesis; (R)-pantothenate from (R)-pantoate and beta-alanine: step 1/1. Its function is as follows. Catalyzes the condensation of pantoate with beta-alanine in an ATP-dependent reaction via a pantoyl-adenylate intermediate. In Citrifermentans bemidjiense (strain ATCC BAA-1014 / DSM 16622 / JCM 12645 / Bem) (Geobacter bemidjiensis), this protein is Pantothenate synthetase.